The sequence spans 110 residues: G antigen 2E (110 aa).

The interval 1–110 (MSWRGRSTYY…NPEEVKTPEE (110 aa)) is disordered. Acidic residues-rich tracts occupy residues 32 to 45 (FSDE…EEGE) and 87 to 96 (ECEDGPDGQE).

This sequence belongs to the GAGE family.

The protein is G antigen 2E (GAGE2E) of Homo sapiens (Human).